Consider the following 37-residue polypeptide: Peptide encoded by miPEP164a (37 aa).

In terms of biological role, regulatory peptide encoded by the primary transcript (pri-miR164a) of the microRNA miR164a that enhances the accumulation of its corresponding mature miRNA. Acts probably as a transcriptional activator of its corresponding pri-miRNA. The chain is Peptide encoded by miPEP164a from Arabidopsis thaliana (Mouse-ear cress).